The sequence spans 340 residues: UDP-3-O-(3-hydroxymyristoyl)glucosamine N-acyltransferase (340 aa).

Catalysis depends on His-239, which acts as the Proton acceptor.

Belongs to the transferase hexapeptide repeat family. LpxD subfamily. As to quaternary structure, homotrimer.

The catalysed reaction is a UDP-3-O-[(3R)-3-hydroxyacyl]-alpha-D-glucosamine + a (3R)-hydroxyacyl-[ACP] = a UDP-2-N,3-O-bis[(3R)-3-hydroxyacyl]-alpha-D-glucosamine + holo-[ACP] + H(+). It carries out the reaction UDP-3-O-[(3R)-3-hydroxytetradecanoyl]-alpha-D-glucosamine + (3R)-hydroxytetradecanoyl-[ACP] = UDP-2-N,3-O-bis[(3R)-3-hydroxytetradecanoyl]-alpha-D-glucosamine + holo-[ACP] + H(+). It participates in glycolipid biosynthesis; lipid IV(A) biosynthesis; lipid IV(A) from (3R)-3-hydroxytetradecanoyl-[acyl-carrier-protein] and UDP-N-acetyl-alpha-D-glucosamine: step 3/6. In terms of biological role, catalyzes the N-acylation of UDP-3-O-(hydroxytetradecanoyl)glucosamine using 3-hydroxytetradecanoyl-ACP as the acyl donor. Is involved in the biosynthesis of lipid A, a phosphorylated glycolipid that anchors the lipopolysaccharide to the outer membrane of the cell. This is UDP-3-O-(3-hydroxymyristoyl)glucosamine N-acyltransferase from Wigglesworthia glossinidia brevipalpis.